Here is a 396-residue protein sequence, read N- to C-terminus: MTTPFKRIHLIVMDSVGIGEGPDAAAFNDEGSHTLKHTLEGFKQKLPHLEQLGLGNIAPLPVVSKVTHPGAFYTKLSEASVGKDTMTGHWEIMGLNIMQPFKVYPNGFPEELVKEIESMTGRKVVANRPASGTQIIDEWGEHQMKTGDLIVYTSADPVLQIAAHEDVIPLEELYEICEKVRELTKDPKYLIGRIIARPYVGEPGNFTRTSNRHDYALKPFGRTVMNSLKDNGYDVIAIGKINDIYDGEGVTEAIRTKNNMDGMDQLIEVVKKDFEGISFLNLVDFDALYGHRRDKEGYAQAIKDFDLRLPELMNHLREDDLVIITADHGNDPIAKGTDHTREYIPLLMFSPKIKDYHELSQDTTFSSIGVTIADNFNVELPKYGKSYLKEMGVEHQ.

Mn(2+)-binding residues include Asp14, Asp286, His291, Asp327, His328, and His339.

The protein belongs to the phosphopentomutase family. It depends on Mn(2+) as a cofactor.

It is found in the cytoplasm. The catalysed reaction is 2-deoxy-alpha-D-ribose 1-phosphate = 2-deoxy-D-ribose 5-phosphate. It carries out the reaction alpha-D-ribose 1-phosphate = D-ribose 5-phosphate. The protein operates within carbohydrate degradation; 2-deoxy-D-ribose 1-phosphate degradation; D-glyceraldehyde 3-phosphate and acetaldehyde from 2-deoxy-alpha-D-ribose 1-phosphate: step 1/2. Isomerase that catalyzes the conversion of deoxy-ribose 1-phosphate (dRib-1-P) and ribose 1-phosphate (Rib-1-P) to deoxy-ribose 5-phosphate (dRib-5-P) and ribose 5-phosphate (Rib-5-P), respectively. The polypeptide is Phosphopentomutase (Staphylococcus epidermidis (strain ATCC 35984 / DSM 28319 / BCRC 17069 / CCUG 31568 / BM 3577 / RP62A)).